A 485-amino-acid polypeptide reads, in one-letter code: Solute carrier family 35 member F4 (485 aa).

Composition is skewed to polar residues over residues 32 to 42 (SQKSTTRSSVT) and 50 to 64 (CPSS…LSPL). Disordered stretches follow at residues 32–64 (SQKS…LSPL) and 78–111 (QSRG…SSQE). The segment covering 88-98 (RRVERQSRSGD) has biased composition (basic and acidic residues). The span at 99–111 (DGTQTRPESSSQE) shows a compositional bias: polar residues. A run of 10 helical transmembrane segments spans residues 129-149 (IWGL…TQIV), 156-176 (FYCP…FFPV), 217-234 (APFS…LLAL), 241-261 (DVSA…WIVL), 265-285 (FMGV…MMAY), 294-314 (IIGV…KVLF), 329-349 (FVST…IILY), 359-381 (FAAL…NILV), 383-405 (VGVV…PGNA), and 414-434 (VIFN…FLLM). One can recognise an EamA domain in the interval 225 to 285 (LTNYLYLLAL…AITGIVMMAY (61 aa)).

The protein belongs to the SLC35F solute transporter family.

The protein localises to the membrane. In terms of biological role, putative solute transporter. The sequence is that of Solute carrier family 35 member F4 (Slc35f4) from Mus musculus (Mouse).